A 384-amino-acid polypeptide reads, in one-letter code: ATP phosphoribosyltransferase regulatory subunit (384 aa).

The protein belongs to the class-II aminoacyl-tRNA synthetase family. HisZ subfamily. As to quaternary structure, heteromultimer composed of HisG and HisZ subunits.

The protein resides in the cytoplasm. It functions in the pathway amino-acid biosynthesis; L-histidine biosynthesis; L-histidine from 5-phospho-alpha-D-ribose 1-diphosphate: step 1/9. Functionally, required for the first step of histidine biosynthesis. May allow the feedback regulation of ATP phosphoribosyltransferase activity by histidine. This chain is ATP phosphoribosyltransferase regulatory subunit, found in Rhodospirillum rubrum (strain ATCC 11170 / ATH 1.1.1 / DSM 467 / LMG 4362 / NCIMB 8255 / S1).